The following is a 710-amino-acid chain: Cleavage and polyadenylation factor complex subunit C74.02c (710 aa).

Residues 1 to 30 are compositionally biased toward polar residues; sequence MDNWNSVRNVSSDRQTSKTSENPPHTSNEY. Disordered regions lie at residues 1-42, 85-170, and 361-510; these read MDNW…LSPD, ASSN…SDVN, and GPAM…SVSW. Low complexity predominate over residues 86 to 108; it reads SSNPSLISSGSSQTGSPSQSLSS. Positions 109–170 are enriched in polar residues; the sequence is NKEPSSPGIS…EVPSSKSDVN (62 aa). Composition is skewed to low complexity over residues 361–383 and 401–420; these read GPAM…SSNS and LASS…PLTK. Positions 421-430 are enriched in polar residues; sequence QQTNPSTPLS. Over residues 437–447 the composition is skewed to basic and acidic residues; sequence KGREKEKDKDS.

As to quaternary structure, component of the cleavage and polyadenylation factor (CPF) complex.

Its subcellular location is the cytoplasm. It localises to the nucleus. RNA-binding component of the cleavage and polyadenylation factor (CPF) complex, which plays a key role in polyadenylation-dependent pre-mRNA 3'-end formation. Involved in poly(A) site recognition. May be involved in coupling transcription termination and mRNA 3'-end formation. In Schizosaccharomyces pombe (strain 972 / ATCC 24843) (Fission yeast), this protein is Cleavage and polyadenylation factor complex subunit C74.02c.